A 113-amino-acid chain; its full sequence is UPF0321 protein C569.02c (113 aa).

A signal peptide spans 1–17 (MLLLFCICCAFIKLVLA). Residues N20, N39, and N65 are each glycosylated (N-linked (GlcNAc...) asparagine).

Belongs to the UPF0321 family.

This is UPF0321 protein C569.02c from Schizosaccharomyces pombe (strain 972 / ATCC 24843) (Fission yeast).